We begin with the raw amino-acid sequence, 561 residues long: Magnesium-chelatase 60 kDa subunit (561 aa).

Disordered stretches follow at residues proline 234–aspartate 268 and arginine 298–glycine 324. Positions glutamate 237–proline 249 are enriched in pro residues. The span at glutamate 250–aspartate 265 shows a compositional bias: acidic residues. Residues arginine 314–lysine 323 are compositionally biased toward basic residues. A VWFA domain is found at valine 379–leucine 559.

Belongs to the Mg-chelatase subunits D/I family.

It catalyses the reaction protoporphyrin IX + Mg(2+) + ATP + H2O = Mg-protoporphyrin IX + ADP + phosphate + 3 H(+). It functions in the pathway porphyrin-containing compound metabolism; bacteriochlorophyll biosynthesis. In terms of biological role, involved in bacteriochlorophyll biosynthesis; introduces a magnesium ion into protoporphyrin IX to yield Mg-protoporphyrin IX. The protein is Magnesium-chelatase 60 kDa subunit (bchD) of Rhodobacter capsulatus (strain ATCC BAA-309 / NBRC 16581 / SB1003).